A 476-amino-acid polypeptide reads, in one-letter code: Nodulation protein NoeA (476 aa).

In terms of biological role, not known; does not seem to participate in nod factor synthesis but required for nodulation on some specific Medicago species such as M.littoralis. This Rhizobium meliloti (strain 1021) (Ensifer meliloti) protein is Nodulation protein NoeA (noeA).